The following is a 313-amino-acid chain: tRNA dimethylallyltransferase (313 aa).

10-17 (GPTAVGKT) provides a ligand contact to ATP. 12–17 (TAVGKT) is a binding site for substrate. The interval 35–38 (DSMQ) is interaction with substrate tRNA.

This sequence belongs to the IPP transferase family. In terms of assembly, monomer. Mg(2+) serves as cofactor.

The catalysed reaction is adenosine(37) in tRNA + dimethylallyl diphosphate = N(6)-dimethylallyladenosine(37) in tRNA + diphosphate. In terms of biological role, catalyzes the transfer of a dimethylallyl group onto the adenine at position 37 in tRNAs that read codons beginning with uridine, leading to the formation of N6-(dimethylallyl)adenosine (i(6)A). The polypeptide is tRNA dimethylallyltransferase (Alkaliphilus oremlandii (strain OhILAs) (Clostridium oremlandii (strain OhILAs))).